Consider the following 344-residue polypeptide: Phenylalanine--tRNA ligase alpha subunit (344 aa).

Position 256 (Glu-256) interacts with Mg(2+).

It belongs to the class-II aminoacyl-tRNA synthetase family. Phe-tRNA synthetase alpha subunit type 1 subfamily. Tetramer of two alpha and two beta subunits. Mg(2+) is required as a cofactor.

It is found in the cytoplasm. It catalyses the reaction tRNA(Phe) + L-phenylalanine + ATP = L-phenylalanyl-tRNA(Phe) + AMP + diphosphate + H(+). This Geobacillus thermodenitrificans (strain NG80-2) protein is Phenylalanine--tRNA ligase alpha subunit.